A 450-amino-acid polypeptide reads, in one-letter code: MEMMGMENIQQNQGLKQKDEQFVWHAMKGAHQADSLIAQKAEGAWVTDTDGRRYLDAMSGLWCVNIGYGRKELAEAAYEQLKELPYYPLTQSHAPAIQLAEKLNEWLGGDYVIFFSNSGSEANETAFKIARQYHLQNGDHSRYKFISRYRAYHGNTLGALSATGQAQRKYKYEPLSQGFLHAAPPDIYRNPDDADTLESANEIDRIMTWELSETIAGVIMEPIITGGGILMPPDGYMKKVEDICRRHGALLICDEVICGFGRTGEPFGFMHYGVKPDIITMAKGITSAYLPLSATAVKRDIFEAYQGEAPYDRFRHVNTFGGSPAACALALKNLQIMEDEQLIQRSRDLGAKLLGELQALREHPAVGDVRGKGLLIGIELVKDKLTKEPADAAKVNQVVAACKEKGLIIGKNGDTVAGYNNVIQLAPPFCLTEEDLSFIVKTVKESFQTI.

The residue at position 283 (Lys-283) is an N6-(pyridoxal phosphate)lysine.

Belongs to the class-III pyridoxal-phosphate-dependent aminotransferase family. Requires pyridoxal 5'-phosphate as cofactor.

Functionally, essential for glycerol catabolism. This is an uncharacterized protein from Bacillus subtilis (strain 168).